Reading from the N-terminus, the 341-residue chain is L-threonine 3-dehydrogenase (341 aa).

Zn(2+) is bound at residue Cys-38. Residues Thr-40 and His-43 each act as charge relay system in the active site. Zn(2+) contacts are provided by His-63, Glu-64, Cys-93, Cys-96, Cys-99, and Cys-107. NAD(+)-binding positions include Ile-175, Asp-195, Arg-200, 262 to 264, and 286 to 287; these read LGI and IY.

Belongs to the zinc-containing alcohol dehydrogenase family. As to quaternary structure, homotetramer. Zn(2+) is required as a cofactor.

It is found in the cytoplasm. It carries out the reaction L-threonine + NAD(+) = (2S)-2-amino-3-oxobutanoate + NADH + H(+). It participates in amino-acid degradation; L-threonine degradation via oxydo-reductase pathway; glycine from L-threonine: step 1/2. In terms of biological role, catalyzes the NAD(+)-dependent oxidation of L-threonine to 2-amino-3-ketobutyrate. The polypeptide is L-threonine 3-dehydrogenase (Shewanella baltica (strain OS185)).